Consider the following 320-residue polypeptide: MVSSPARPIRIGSRKSQLALVQTHWVQGELQRLYPDRQFDVQTMSTQGDIILDVALAKIGDKGLFTKELEVAMLAGEVDFAVHSLKDLPTRLPEGLILGCVTEREDPADALVVHDRFKDHQLETLPEGTVIGTSSLRRLAQLRHHYPHLQFKDVRGNLNTRLAKLDAGEYDALILAAAGLQRLSMADRIHQLIPAAVSLHAVGQGALGIECRAEDPEILELLKALEHEPTSQRCLAERAFLRELEGGCQVPIGVNTAIADGTLTLTGMVASLDGQRLLRDQVSGPTSDPEALGLALAAQLKAQGAKEILDEIFATVRPEA.

Cys-248 carries the S-(dipyrrolylmethanemethyl)cysteine modification.

The protein belongs to the HMBS family. As to quaternary structure, monomer. It depends on dipyrromethane as a cofactor.

The catalysed reaction is 4 porphobilinogen + H2O = hydroxymethylbilane + 4 NH4(+). It functions in the pathway porphyrin-containing compound metabolism; protoporphyrin-IX biosynthesis; coproporphyrinogen-III from 5-aminolevulinate: step 2/4. The protein operates within porphyrin-containing compound metabolism; chlorophyll biosynthesis. Tetrapolymerization of the monopyrrole PBG into the hydroxymethylbilane pre-uroporphyrinogen in several discrete steps. This is Porphobilinogen deaminase from Synechococcus elongatus (strain ATCC 33912 / PCC 7942 / FACHB-805) (Anacystis nidulans R2).